A 156-amino-acid chain; its full sequence is Small ribosomal subunit protein uS7 (156 aa).

It belongs to the universal ribosomal protein uS7 family. In terms of assembly, part of the 30S ribosomal subunit. Contacts proteins S9 and S11.

Functionally, one of the primary rRNA binding proteins, it binds directly to 16S rRNA where it nucleates assembly of the head domain of the 30S subunit. Is located at the subunit interface close to the decoding center, probably blocks exit of the E-site tRNA. The polypeptide is Small ribosomal subunit protein uS7 (Trichlorobacter lovleyi (strain ATCC BAA-1151 / DSM 17278 / SZ) (Geobacter lovleyi)).